The sequence spans 433 residues: Homeobox protein Hox-D3 (433 aa).

Disordered regions lie at residues 44–198, 258–280, and 401–433; these read STPH…SKRV, GILH…AAGH, and HHGP…LTHL. The segment covering 58–74 has biased composition (polar residues); that stretch reads SLDSDYPSSACSIQSSA. Positions 97-106 are enriched in gly residues; sequence NSQGGGGGNQ. Residues 116 to 132 show a composition bias toward pro residues; sequence PPQPPPPPPPTLPPSSP. The span at 146 to 159 shows a compositional bias: low complexity; sequence GGLSASSSSSTISK. Positions 161 to 166 match the Antp-type hexapeptide motif; the sequence is IFPWMK. A compositionally biased stretch (polar residues) spans 171 to 183; sequence NSKQKNSCATSGE. Positions 195–254 form a DNA-binding region, homeobox; that stretch reads SKRVRTAYTSAQLVELEKEFHFNRYLCRPRRVEMANLLNLTERQIKIWFQNRRMKYKKDQ.

The protein belongs to the Antp homeobox family. Detected in adult kidney, but not in other adult tissues tested.

It localises to the nucleus. Its function is as follows. Sequence-specific transcription factor which is part of a developmental regulatory system that provides cells with specific positional identities on the anterior-posterior axis. The sequence is that of Homeobox protein Hox-D3 (Hoxd3) from Mus musculus (Mouse).